We begin with the raw amino-acid sequence, 189 residues long: Threonylcarbamoyl-AMP synthase (189 aa).

The 181-residue stretch at 9–189 (ASAQRKLSVY…IDGETGKRLR (181 aa)) folds into the YrdC-like domain.

It belongs to the SUA5 family. TsaC subfamily.

The protein localises to the cytoplasm. The enzyme catalyses L-threonine + hydrogencarbonate + ATP = L-threonylcarbamoyladenylate + diphosphate + H2O. Functionally, required for the formation of a threonylcarbamoyl group on adenosine at position 37 (t(6)A37) in tRNAs that read codons beginning with adenine. Catalyzes the conversion of L-threonine, HCO(3)(-)/CO(2) and ATP to give threonylcarbamoyl-AMP (TC-AMP) as the acyladenylate intermediate, with the release of diphosphate. The chain is Threonylcarbamoyl-AMP synthase from Neisseria gonorrhoeae (strain ATCC 700825 / FA 1090).